The primary structure comprises 388 residues: Serine/threonine-protein phosphatase sitA (388 aa).

Residues aspartate 67 and histidine 69 each coordinate Mn(2+). Positions 86 to 146 (PDGSEAEAPK…SQRDRSSSSG (61 aa)) are disordered. Positions 161 and 193 each coordinate Mn(2+). Histidine 194 (proton donor) is an active-site residue. Mn(2+)-binding residues include histidine 243 and histidine 317.

Belongs to the PPP phosphatase family. PP-6 (PP-V) subfamily. Mn(2+) serves as cofactor.

The enzyme catalyses O-phospho-L-threonyl-[protein] + H2O = L-threonyl-[protein] + phosphate. Its function is as follows. Protein phosphatase that acts as a modulator of pkcA/mpkA activity involved in the cell wall integrity pathway. Plays an important role in regulation of adhesion, cell wall integrity, biofilm formation, and virulence. The polypeptide is Serine/threonine-protein phosphatase sitA (Aspergillus fumigatus (strain ATCC MYA-4609 / CBS 101355 / FGSC A1100 / Af293) (Neosartorya fumigata)).